A 431-amino-acid polypeptide reads, in one-letter code: Forkhead box protein N2 (431 aa).

The fork-head DNA-binding region spans 112–208; the sequence is KPPYSFSLLI…QALKKQPFSS (97 aa). A disordered region spans residues 364–387; the sequence is DSGYASQPCAKISEKGQSGKKMRK.

Its subcellular location is the nucleus. In terms of biological role, binds to the purine-rich region in HTLV-I LTR. The sequence is that of Forkhead box protein N2 (FOXN2) from Homo sapiens (Human).